The sequence spans 272 residues: Shikimate dehydrogenase (NADP(+)) (272 aa).

Shikimate is bound by residues 14–16 (SLS) and threonine 61. The Proton acceptor role is filled by lysine 65. Residue aspartate 102 participates in shikimate binding. NADP(+) contacts are provided by residues 127-131 (GAGGA), 151-156 (NRTPSK), and leucine 215. Tyrosine 217 provides a ligand contact to shikimate. Glycine 239 contacts NADP(+).

The protein belongs to the shikimate dehydrogenase family. Homodimer.

It carries out the reaction shikimate + NADP(+) = 3-dehydroshikimate + NADPH + H(+). It participates in metabolic intermediate biosynthesis; chorismate biosynthesis; chorismate from D-erythrose 4-phosphate and phosphoenolpyruvate: step 4/7. Its function is as follows. Involved in the biosynthesis of the chorismate, which leads to the biosynthesis of aromatic amino acids. Catalyzes the reversible NADPH linked reduction of 3-dehydroshikimate (DHSA) to yield shikimate (SA). The sequence is that of Shikimate dehydrogenase (NADP(+)) from Coxiella burnetii (strain Dugway 5J108-111).